Reading from the N-terminus, the 126-residue chain is MEEITMALNIENIIAEIKEASILELNDLVKAIEEEFGVTAAAPVAAAAAGGAEEAAKDSFDVELTSAGDKKVGVIKAVREITGLGLKEAKGLVDGAPANVKEGVAAAEAEEIKAKLEEAGATITLK.

This sequence belongs to the bacterial ribosomal protein bL12 family. In terms of assembly, homodimer. Part of the ribosomal stalk of the 50S ribosomal subunit. Forms a multimeric L10(L12)X complex, where L10 forms an elongated spine to which 2 to 4 L12 dimers bind in a sequential fashion. Binds GTP-bound translation factors.

Functionally, forms part of the ribosomal stalk which helps the ribosome interact with GTP-bound translation factors. Is thus essential for accurate translation. This chain is Large ribosomal subunit protein bL12, found in Streptococcus pyogenes serotype M28 (strain MGAS6180).